The following is a 232-amino-acid chain: 2-C-methyl-D-erythritol 4-phosphate cytidylyltransferase (232 aa).

This sequence belongs to the IspD/TarI cytidylyltransferase family. IspD subfamily.

It carries out the reaction 2-C-methyl-D-erythritol 4-phosphate + CTP + H(+) = 4-CDP-2-C-methyl-D-erythritol + diphosphate. It functions in the pathway isoprenoid biosynthesis; isopentenyl diphosphate biosynthesis via DXP pathway; isopentenyl diphosphate from 1-deoxy-D-xylulose 5-phosphate: step 2/6. Its function is as follows. Catalyzes the formation of 4-diphosphocytidyl-2-C-methyl-D-erythritol from CTP and 2-C-methyl-D-erythritol 4-phosphate (MEP). The chain is 2-C-methyl-D-erythritol 4-phosphate cytidylyltransferase from Bacillus velezensis (strain DSM 23117 / BGSC 10A6 / LMG 26770 / FZB42) (Bacillus amyloliquefaciens subsp. plantarum).